The primary structure comprises 639 residues: Transcription factor phomR (639 aa).

Residues 14–41 (CWTCRLRRKKCNEGGPPCDNCEARGIHC) constitute a DNA-binding region (zn(2)-C6 fungal-type). Disordered stretches follow at residues 58 to 136 (REEA…AGTG) and 476 to 499 (LPRS…TGPE). The segment covering 68–108 (SGRGRSYSRSSSTAAAAAPKPAEGAMVTGGSSSSSRGSGSS) has biased composition (low complexity).

It localises to the nucleus. Functionally, transcription factor; part of the gene cluster that mediates the biosynthesis of the phomopsins, a group of hexapeptide mycotoxins which infects lupins and causes lupinosis disease in livestock. May play a role in the regulation of the production of phomopsins. The chain is Transcription factor phomR from Diaporthe leptostromiformis (Lupinosis disease fungus).